Consider the following 240-residue polypeptide: 1-(5-phosphoribosyl)-5-[(5-phosphoribosylamino)methylideneamino] imidazole-4-carboxamide isomerase (240 aa).

The active-site Proton acceptor is Asp10. Asp131 acts as the Proton donor in catalysis.

Belongs to the HisA/HisF family.

The protein localises to the cytoplasm. The catalysed reaction is 1-(5-phospho-beta-D-ribosyl)-5-[(5-phospho-beta-D-ribosylamino)methylideneamino]imidazole-4-carboxamide = 5-[(5-phospho-1-deoxy-D-ribulos-1-ylimino)methylamino]-1-(5-phospho-beta-D-ribosyl)imidazole-4-carboxamide. Its pathway is amino-acid biosynthesis; L-histidine biosynthesis; L-histidine from 5-phospho-alpha-D-ribose 1-diphosphate: step 4/9. The polypeptide is 1-(5-phosphoribosyl)-5-[(5-phosphoribosylamino)methylideneamino] imidazole-4-carboxamide isomerase (Shouchella clausii (strain KSM-K16) (Alkalihalobacillus clausii)).